A 614-amino-acid polypeptide reads, in one-letter code: MGKVIGIDLGTTNSCVAVMEGGEAVVITNAEGNRTTPSVVGFSKTGERLAGQVAKRQAVSNPDKTVISIKRHMGTDYKVKIDDKSYSPQEISAMILQKLKADAEAYLGQTVTEAVITVPAYFTDAQRQATKDAGTIAGLDVKRIINEPTAAALAYGLDKQEDQTVLVFDLGGGTFDVSLLELSQGMVEVKATSGNNKLGGDDFDQRLIDYMVAEFKKDQGVDLAKDRVALQRLKEAAEKAKVELSGVSTTNVNLPFITMTGEGPAHLDMNITRAKFEELTADLVEATLGPTRQALADAKLSWNEVNQVILVGGSTRIPAVQEAIKKLSGKEPHKGVNPDEVVALGAAIQGGVLAGEVKDIILVDVTPLSLGIETLGGVFTRIIDRNTTVPTTKSQVFSTAADSQTSVDIHVLQGEREMAAYNKTLGRFQLSGIPPAPRGIPQIEVKFDIDANGIVHVSAKDMATGNEQKVTITASTGLSQEEIEKMKKDAEAHADEDKKRKELIDAKNQADSMVYQTEKTLKDFEGKIPDNEAEPIKKALEELKTAAAGENIELIKEKTEGVTKVLYPIIEKMYQQTGGAAPGPDMGADPGAGGAQGDDNVVDAEYTEVDKDQK.

Residue T174 is modified to Phosphothreonine; by autocatalysis. Positions 576–614 (QTGGAAPGPDMGADPGAGGAQGDDNVVDAEYTEVDKDQK) are disordered. Positions 578–589 (GGAAPGPDMGAD) are enriched in low complexity.

Belongs to the heat shock protein 70 family.

Functionally, acts as a chaperone. In Desulfitobacterium hafniense (strain DSM 10664 / DCB-2), this protein is Chaperone protein DnaK.